We begin with the raw amino-acid sequence, 229 residues long: GTP cyclohydrolase 1 (229 aa).

Residues 1–21 form a disordered region; sequence MTLAKPGSGSQSRMDDKAHFK. Residues Cys-116, His-119, and Cys-187 each contribute to the Zn(2+) site.

It belongs to the GTP cyclohydrolase I family. In terms of assembly, toroid-shaped homodecamer, composed of two pentamers of five dimers.

It carries out the reaction GTP + H2O = 7,8-dihydroneopterin 3'-triphosphate + formate + H(+). The protein operates within cofactor biosynthesis; 7,8-dihydroneopterin triphosphate biosynthesis; 7,8-dihydroneopterin triphosphate from GTP: step 1/1. The polypeptide is GTP cyclohydrolase 1 (Synechococcus sp. (strain JA-2-3B'a(2-13)) (Cyanobacteria bacterium Yellowstone B-Prime)).